Here is a 217-residue protein sequence, read N- to C-terminus: MTRIKICGITRMEDARAAALFGADALGFNFSPESPRCVTKDAARTMVCALPPFIEGVGVFVEQDPREIIEICRYCGLSVAQLHGSRYSEEETKLVLEGVRVLKVFRPETDFTPAAVLRFREATGVSAFLFDTYRPGMEGGTGEQMEGSLAERIFSGLPEGCYGVLAGGLNPGNVREAVQSLRPYALDTASGVEESPGIKSHEKMQAFVQAVRAAGER.

It belongs to the TrpF family.

The enzyme catalyses N-(5-phospho-beta-D-ribosyl)anthranilate = 1-(2-carboxyphenylamino)-1-deoxy-D-ribulose 5-phosphate. It participates in amino-acid biosynthesis; L-tryptophan biosynthesis; L-tryptophan from chorismate: step 3/5. The sequence is that of N-(5'-phosphoribosyl)anthranilate isomerase from Chlorobium luteolum (strain DSM 273 / BCRC 81028 / 2530) (Pelodictyon luteolum).